The following is a 142-amino-acid chain: Hemoglobin subunit alpha (142 aa).

The Globin domain maps to 2-142 (KLSAEDKHNV…VGHVLTSKYR (141 aa)). Residue histidine 59 coordinates O2. Histidine 88 contacts heme b.

It belongs to the globin family. As to quaternary structure, heterotetramer of two alpha chains and two beta chains. Red blood cells.

Its function is as follows. Involved in oxygen transport from the lung to the various peripheral tissues. This Taricha granulosa (Roughskin newt) protein is Hemoglobin subunit alpha (HBA).